The following is a 64-amino-acid chain: MSKLVKTLTISEISKAQNNGGKPAWCWYTLAMCGAGYDSGTCDYMYSHCFGIKHHSSGSSSYHC.

An N-terminal signal peptide occupies residues 1–21 (MSKLVKTLTISEISKAQNNGG). Intrachain disulfides connect Cys-26-Cys-49 and Cys-33-Cys-42. O-linked (GlcNAc) serine glycosylation is present at Ser-39. S-linked (GlcNAc) cysteine glycosylation occurs at Cys-64.

The protein resides in the secreted. Has antibacterial activity against L.plantarum ATCC 8014. In purified form, the activity is bacteriostatic (IC(50)=2 nM) rather than bactericidal. The sequence is that of Bacteriocin glycocin F from Lactiplantibacillus plantarum (Lactobacillus plantarum).